The chain runs to 695 residues: D-(-)-3-hydroxybutyrate oligomer hydrolase (695 aa).

The first 17 residues, 1–17 (MTTHGWGTRILLGAALA), serve as a signal peptide directing secretion. Residue S308 is the Charge relay system of the active site.

This sequence belongs to the D-(-)-3-hydroxybutyrate oligomer hydrolase family.

Its subcellular location is the secreted. It carries out the reaction (3R)-hydroxybutanoate dimer + H2O = 2 (R)-3-hydroxybutanoate + H(+). It functions in the pathway lipid metabolism; butanoate metabolism. Its function is as follows. Participates in the degradation of poly-3-hydroxybutyrate (PHB). It works downstream of poly(3-hydroxybutyrate) depolymerase, hydrolyzing D(-)-3-hydroxybutyrate oligomers of various length (3HB-oligomers) into 3HB-monomers. The chain is D-(-)-3-hydroxybutyrate oligomer hydrolase from Burkholderia ambifaria (strain ATCC BAA-244 / DSM 16087 / CCUG 44356 / LMG 19182 / AMMD) (Burkholderia cepacia (strain AMMD)).